Consider the following 468-residue polypeptide: Midnolin (468 aa).

One can recognise a Ubiquitin-like domain in the interval 31–105 (MSLAIHSTTG…LTLVPTVEAG (75 aa)). Disordered regions lie at residues 182–264 (PSIA…RSRK) and 404–447 (LRRK…LGLD). Residues 185–201 (ASPVSSPCRPVSSAARV) show a composition bias toward low complexity. Over residues 202–213 (PPVPTSPSPASP) the composition is skewed to pro residues. Low complexity-rich tracts occupy residues 237-260 (SPTA…SPAP) and 419-431 (SPSR…DSSS).

Interacts with GCK; the interaction occurs preferentially at low glucose levels. Interacts with the proteasome.

It is found in the nucleus. The protein resides in the nucleolus. It localises to the cytoplasm. The protein localises to the cytosol. Functionally, facilitates the ubiquitin-independent proteasomal degradation of stimulus-induced transcription factors such as FOSB, EGR1, NR4A1, and IRF4 to the proteasome for degradation. Promotes also the degradation of other substrates such as CBX4. Plays a role in inhibiting the activity of glucokinase GCK and both glucose-induced and basal insulin secretion. This chain is Midnolin (MIDN), found in Homo sapiens (Human).